The following is a 229-amino-acid chain: UPF0758 protein Cbei_0490 (229 aa).

Positions 107–229 constitute an MPN domain; sequence KITSPKDLAS…FVSLKERGLI (123 aa). 3 residues coordinate Zn(2+): His-178, His-180, and Asp-191. The short motif at 178–191 is the JAMM motif element; the sequence is HNHPSGDPTPSRED.

This sequence belongs to the UPF0758 family.

The sequence is that of UPF0758 protein Cbei_0490 from Clostridium beijerinckii (strain ATCC 51743 / NCIMB 8052) (Clostridium acetobutylicum).